A 341-amino-acid chain; its full sequence is tRNA uridine(34) hydroxylase (341 aa).

Residues 139 to 233 (SDPEVVLVDT…YLEEVPSTET (95 aa)) enclose the Rhodanese domain. The Cysteine persulfide intermediate role is filled by Cys-193. Basic and acidic residues-rich tracts occupy residues 306-316 (SLAEERGESHI) and 324-341 (IEER…QANK). A disordered region spans residues 306–341 (SLAEERGESHIGGDIQNIIEERRQEKNDKKAKQANK).

The protein belongs to the TrhO family.

It catalyses the reaction uridine(34) in tRNA + AH2 + O2 = 5-hydroxyuridine(34) in tRNA + A + H2O. Catalyzes oxygen-dependent 5-hydroxyuridine (ho5U) modification at position 34 in tRNAs. The protein is tRNA uridine(34) hydroxylase of Colwellia psychrerythraea (strain 34H / ATCC BAA-681) (Vibrio psychroerythus).